The primary structure comprises 161 residues: Eukaryotic translation initiation factor 5A-1 (161 aa).

A Hypusine modification is found at Lys54.

This sequence belongs to the eIF-5A family. In terms of processing, lys-54 undergoes hypusination, a unique post-translational modification that consists in the addition of a butylamino group from spermidine to lysine side chain, leading to the formation of the unusual amino acid hypusine. eIF-5As are the only known proteins to undergo this modification, which is essential for their function. As to expression, expressed specifically in the germline in the distal region of gonads where germ cells actively proliferate.

The protein resides in the cytoplasm. Translation factor that promotes translation elongation and termination, particularly upon ribosome stalling at specific amino acid sequence contexts. Binds between the exit (E) and peptidyl (P) site of the ribosome and promotes rescue of stalled ribosome: specifically required for efficient translation of polyproline-containing peptides as well as other motifs that stall the ribosome. Acts as a ribosome quality control (RQC) cofactor by joining the RQC complex to facilitate peptidyl transfer during CAT tailing step. Required for mitotic germ cell proliferation, gametogenesis after entry into meiosis, and localization of the P granule component pgl-1 on P granules. In Caenorhabditis elegans, this protein is Eukaryotic translation initiation factor 5A-1 (iff-1).